We begin with the raw amino-acid sequence, 295 residues long: Deleted in azoospermia-like (295 aa).

Over residues 1–10 the composition is skewed to polar residues; it reads MSAANPETPN. The disordered stretch occupies residues 1-25; that stretch reads MSAANPETPNSTISREASTQSSSAA. The segment covering 11–25 has biased composition (low complexity); sequence STISREASTQSSSAA. The region spanning 40 to 115 is the RRM domain; the sequence is NTVFVGGIDV…KKLKLGPAIR (76 aa). A homodimerization region spans residues 80 to 132; it reads KGYGFVSFFNDVDVQKIVESQINFHGKKLKLGPAIRKQNLCAYHVQPRPLVFN. The DAZ domain occupies 167 to 190; it reads AYPTYPNSPVQVITGYQLPVYNYQ. Y276 carries the post-translational modification Phosphotyrosine.

The protein belongs to the RRM DAZ family. In terms of assembly, homodimer and heterodimer. Forms a heterodimer with DAZ. Interacts with BOLL, DAZAP1 and DAZAP2. Interacts with PUM2 Multiple DAZL RRMs can bind to a single RNA containing multiple GUU triplets. As to expression, testis specific.

Its subcellular location is the cytoplasm. It is found in the nucleus. RNA-binding protein, which is essential for gametogenesis in both males and females. Plays a central role during spermatogenesis. Acts by binding to the 3'-UTR of mRNA, specifically recognizing GUU triplets, and thereby regulating the translation of key transcripts. In Macaca fascicularis (Crab-eating macaque), this protein is Deleted in azoospermia-like (DAZL).